We begin with the raw amino-acid sequence, 193 residues long: Phosphoheptose isomerase (193 aa).

Positions 37-193 (LAASFKADGK…QLIEKEMASV (157 aa)) constitute an SIS domain. 52-54 (NGG) is a substrate binding site. Positions 61 and 65 each coordinate Zn(2+). Substrate-binding positions include Glu65, 93–94 (ND), 119–121 (STS), Ser124, and Gln172. Gln172 and His180 together coordinate Zn(2+).

Belongs to the SIS family. GmhA subfamily. In terms of assembly, homotetramer. It depends on Zn(2+) as a cofactor.

Its subcellular location is the cytoplasm. The enzyme catalyses 2 D-sedoheptulose 7-phosphate = D-glycero-alpha-D-manno-heptose 7-phosphate + D-glycero-beta-D-manno-heptose 7-phosphate. The protein operates within carbohydrate biosynthesis; D-glycero-D-manno-heptose 7-phosphate biosynthesis; D-glycero-alpha-D-manno-heptose 7-phosphate and D-glycero-beta-D-manno-heptose 7-phosphate from sedoheptulose 7-phosphate: step 1/1. Functionally, catalyzes the isomerization of sedoheptulose 7-phosphate in D-glycero-D-manno-heptose 7-phosphate. The protein is Phosphoheptose isomerase of Edwardsiella ictaluri (strain 93-146).